Here is a 332-residue protein sequence, read N- to C-terminus: tRNA N6-adenosine threonylcarbamoyltransferase (332 aa).

His-107 and His-111 together coordinate Fe cation. Substrate contacts are provided by residues 129–133 (LVSGG), Asp-162, Gly-175, and Asn-267. Asp-295 contributes to the Fe cation binding site.

It belongs to the KAE1 / TsaD family. Fe(2+) serves as cofactor.

It is found in the cytoplasm. The catalysed reaction is L-threonylcarbamoyladenylate + adenosine(37) in tRNA = N(6)-L-threonylcarbamoyladenosine(37) in tRNA + AMP + H(+). Functionally, required for the formation of a threonylcarbamoyl group on adenosine at position 37 (t(6)A37) in tRNAs that read codons beginning with adenine. Is involved in the transfer of the threonylcarbamoyl moiety of threonylcarbamoyl-AMP (TC-AMP) to the N6 group of A37, together with TsaE and TsaB. TsaD likely plays a direct catalytic role in this reaction. This Campylobacter hominis (strain ATCC BAA-381 / DSM 21671 / CCUG 45161 / LMG 19568 / NCTC 13146 / CH001A) protein is tRNA N6-adenosine threonylcarbamoyltransferase.